The following is a 334-amino-acid chain: 3-dehydroquinate synthase (334 aa).

Belongs to the archaeal-type DHQ synthase family.

The catalysed reaction is 2-amino-2,3,7-trideoxy-D-lyxo-hept-6-ulosonate + NAD(+) + H2O = 3-dehydroquinate + NH4(+) + NADH + H(+). Its function is as follows. Catalyzes the oxidative deamination and cyclization of 2-amino-3,7-dideoxy-D-threo-hept-6-ulosonic acid (ADH) to yield 3-dehydroquinate (DHQ), which is fed into the canonical shikimic pathway of aromatic amino acid biosynthesis. The sequence is that of 3-dehydroquinate synthase from Korarchaeum cryptofilum (strain OPF8).